Consider the following 216-residue polypeptide: GTP-binding nuclear protein Ran, testis-specific isoform (216 aa).

Residue alanine 2 is modified to N-acetylalanine. Residues 7-171 enclose the Small GTPase Ran-type domain; the sequence is PQIQFKLVLV…FWLARKLIGD (165 aa). 17 to 24 lines the GTP pocket; it reads GDGGTGKT. Threonine 24 is subject to Phosphothreonine. Residues 37–45 form a switch-I region; it reads KEYVATLGV. An N6-acetyllysine modification is found at lysine 60. Position 65–69 (65–69) interacts with GTP; sequence DTAGQ. Residues 68–84 are switch-II; sequence GQEKFGGLRDGYYIQAQ. An N6-acetyllysine; alternate modification is found at lysine 71. A Glycyl lysine isopeptide (Lys-Gly) (interchain with G-Cter in SUMO2); alternate cross-link involves residue lysine 71. Lysine 71 is covalently cross-linked (Glycyl lysine isopeptide (Lys-Gly) (interchain with G-Cter in ubiquitin); alternate). Lysine 99 is subject to N6-acetyllysine. Position 122-125 (122-125) interacts with GTP; sequence NKVD. Position 134 is an N6-acetyllysine (lysine 134). A Glycyl lysine isopeptide (Lys-Gly) (interchain with G-Cter in SUMO2) cross-link involves residue lysine 152. Lysine 159 is subject to N6-acetyllysine; alternate. Lysine 159 is subject to N6-succinyllysine; alternate.

It belongs to the small GTPase superfamily. Ran family. In terms of tissue distribution, testis specific.

The protein localises to the nucleus. The catalysed reaction is GTP + H2O = GDP + phosphate + H(+). Functionally, GTP-binding protein involved in nucleocytoplasmic transport. Required for the import of protein into the nucleus and also for RNA export. Involved in chromatin condensation and control of cell cycle. This is GTP-binding nuclear protein Ran, testis-specific isoform (Rasl2-9) from Rattus norvegicus (Rat).